Reading from the N-terminus, the 387-residue chain is O-methyltransferase fsr2 (387 aa).

Aspartate 231 is a binding site for S-adenosyl-L-methionine. Histidine 280 acts as the Proton acceptor in catalysis.

It belongs to the class I-like SAM-binding methyltransferase superfamily. Cation-independent O-methyltransferase family. COMT subfamily.

The protein operates within polyketide biosynthesis. In terms of biological role, O-methyltransferase; part of the gene cluster that mediates the biosynthesis of fusarubins, highly pigmented naphthoquinones responsible for the coloration of the fruiting bodies. The non-reducing polyketide synthase FSR1 is responsible for the condensation of seven acetyl-CoA units to yield a haptaketide. After rings A and B are formed by aldol-type cyclization, the PKS-derived product is released as 6-O-demethylfusarubinaldehyde. Then, two hydroxyl groups at C-5 and C-10 are incorporated by FSR3, and simultaneously hydroxyl groups at C-6 and C-8 are methylated by FSR2. The aldehyde is, on the one hand, reduced by FSR3 to 8-O-methylfusarubin alcohol, which equilibrates mainly with 8-O-methylfusarubin and only small amounts of 8-O-methylnectriafurone. On the other hand, the aldehyde can be oxidized to form 8-O-methylfusarubinic acid, a reaction driven by FSR3 equilibrating with 8-O-methylfusarubinlactone, finally resulting in 8-O-methylanhydrofusarubinlactol after a further reduction step and loss of water. 8-O-Methylfusarubinic acid can also undergo decarboxylation, resulting in 8-O-methyl-13-hydroxynorjavanicin after another hydroxylation step at C-13. Both steps are most likely also accomplished by FSR3. No enzymatic function has been determined so far for either FSR4 and FSR5. Their deletion does not alter the product spectrum, but the possibility that they catalyze specific enzymatic steps during perithecium development cannot be ruled out. FSR4 might possess a regulatory function in the biosynthesis of fusarubins. In Gibberella fujikuroi (strain CBS 195.34 / IMI 58289 / NRRL A-6831) (Bakanae and foot rot disease fungus), this protein is O-methyltransferase fsr2.